Consider the following 343-residue polypeptide: Phosphoribosylformylglycinamidine cyclo-ligase (343 aa).

This sequence belongs to the AIR synthase family.

The protein localises to the cytoplasm. The enzyme catalyses 2-formamido-N(1)-(5-O-phospho-beta-D-ribosyl)acetamidine + ATP = 5-amino-1-(5-phospho-beta-D-ribosyl)imidazole + ADP + phosphate + H(+). The protein operates within purine metabolism; IMP biosynthesis via de novo pathway; 5-amino-1-(5-phospho-D-ribosyl)imidazole from N(2)-formyl-N(1)-(5-phospho-D-ribosyl)glycinamide: step 2/2. This is Phosphoribosylformylglycinamidine cyclo-ligase from Thermodesulfovibrio yellowstonii (strain ATCC 51303 / DSM 11347 / YP87).